The following is a 146-amino-acid chain: Large ribosomal subunit protein uL15 (146 aa).

Residues 1-18 (MKLHELKPSEGSRKERNR) show a composition bias toward basic and acidic residues. The segment at 1–50 (MKLHELKPSEGSRKERNRVGRGTGSGNGKTSGRGHKGQKARSGGGVRLGF) is disordered. Over residues 21 to 31 (RGTGSGNGKTS) the composition is skewed to gly residues.

It belongs to the universal ribosomal protein uL15 family. In terms of assembly, part of the 50S ribosomal subunit.

Binds to the 23S rRNA. In Listeria monocytogenes serotype 4b (strain CLIP80459), this protein is Large ribosomal subunit protein uL15.